Here is a 94-residue protein sequence, read N- to C-terminus: Co-chaperonin GroES (94 aa).

Belongs to the GroES chaperonin family. In terms of assembly, heptamer of 7 subunits arranged in a ring. Interacts with the chaperonin GroEL.

Its subcellular location is the cytoplasm. Functionally, together with the chaperonin GroEL, plays an essential role in assisting protein folding. The GroEL-GroES system forms a nano-cage that allows encapsulation of the non-native substrate proteins and provides a physical environment optimized to promote and accelerate protein folding. GroES binds to the apical surface of the GroEL ring, thereby capping the opening of the GroEL channel. This is Co-chaperonin GroES from Pediococcus pentosaceus (strain ATCC 25745 / CCUG 21536 / LMG 10740 / 183-1w).